Consider the following 215-residue polypeptide: Urease accessory protein UreG (215 aa).

The tract at residues 1 to 21 (MNAPAPSSARRTKKLPPLRVG) is disordered. Residue 24–31 (GPVGSGKT) participates in GTP binding.

It belongs to the SIMIBI class G3E GTPase family. UreG subfamily. Homodimer. UreD, UreF and UreG form a complex that acts as a GTP-hydrolysis-dependent molecular chaperone, activating the urease apoprotein by helping to assemble the nickel containing metallocenter of UreC. The UreE protein probably delivers the nickel.

The protein resides in the cytoplasm. Functionally, facilitates the functional incorporation of the urease nickel metallocenter. This process requires GTP hydrolysis, probably effectuated by UreG. The sequence is that of Urease accessory protein UreG from Burkholderia lata (strain ATCC 17760 / DSM 23089 / LMG 22485 / NCIMB 9086 / R18194 / 383).